The chain runs to 181 residues: Cyclic AMP-dependent transcription factor ATF-3 (181 aa).

The tract at residues 76–97 (VTKAEVAPEEDERKKRRRERNK) is disordered. K78 is covalently cross-linked (Glycyl lysine isopeptide (Lys-Gly) (interchain with G-Cter in SUMO2)). Residues 86–149 (DERKKRRRER…QHLIYMLNLH (64 aa)) form the bZIP domain. The segment at 88–110 (RKKRRRERNKIAAAKCRNKKKEK) is basic motif. Positions 114–142 (LQKESEKLESVNAELKAQIEELKNEKQHL) are leucine-zipper. Phosphothreonine is present on T162. Residue K175 forms a Glycyl lysine isopeptide (Lys-Gly) (interchain with G-Cter in SUMO2) linkage.

The protein belongs to the bZIP family. ATF subfamily. In terms of assembly, binds DNA as a homodimer or a heterodimer. Interacts with KAT5; promoting KAT5 autoacetylation and KAT5 deubiquitination by USP7.

It is found in the nucleus. Its function is as follows. This protein binds the cAMP response element (CRE) (consensus: 5'-GTGACGT[AC][AG]-3'), a sequence present in many viral and cellular promoters. Represses transcription from promoters with ATF sites. It may repress transcription by stabilizing the binding of inhibitory cofactors at the promoter. The protein is Cyclic AMP-dependent transcription factor ATF-3 (ATF3) of Bos taurus (Bovine).